The sequence spans 198 residues: Pyridoxal 5'-phosphate synthase subunit PdxT (198 aa).

Position 49-51 (49-51) interacts with L-glutamine; that stretch reads GES. C81 serves as the catalytic Nucleophile. L-glutamine-binding positions include R113 and 141 to 142; that span reads IR. Residues H177 and E179 each act as charge relay system in the active site.

Belongs to the glutaminase PdxT/SNO family. As to quaternary structure, in the presence of PdxS, forms a dodecamer of heterodimers. Only shows activity in the heterodimer.

The enzyme catalyses aldehydo-D-ribose 5-phosphate + D-glyceraldehyde 3-phosphate + L-glutamine = pyridoxal 5'-phosphate + L-glutamate + phosphate + 3 H2O + H(+). It catalyses the reaction L-glutamine + H2O = L-glutamate + NH4(+). It participates in cofactor biosynthesis; pyridoxal 5'-phosphate biosynthesis. In terms of biological role, catalyzes the hydrolysis of glutamine to glutamate and ammonia as part of the biosynthesis of pyridoxal 5'-phosphate. The resulting ammonia molecule is channeled to the active site of PdxS. The polypeptide is Pyridoxal 5'-phosphate synthase subunit PdxT (Mycobacterium leprae (strain TN)).